A 203-amino-acid chain; its full sequence is MNAEELAIDPVAAAHRLLGATIAGRGVRAMVVEVEAYGGVPDGPWPDAAAHSYRGRNGRNDVMFGPPGRLYTYRSHGIHVCANVACGPDGTAAAVLLRAAAIEDGAELATSRRGQTVRAVALARGPGNLCAALGITMADNGIDLFDPSSPVRLRLNDTHRARSGPRVGVSQAADRPWRLWLTGRPEVSAYRRSSRAPARGASD.

This sequence belongs to the DNA glycosylase MPG family.

The sequence is that of Putative 3-methyladenine DNA glycosylase from Mycobacterium tuberculosis (strain ATCC 25177 / H37Ra).